We begin with the raw amino-acid sequence, 261 residues long: Phosphatidylglycerol--prolipoprotein diacylglyceryl transferase (261 aa).

7 helical membrane passes run 19-39 (VHWYGLMYLVGFAMAWGLALY), 56-76 (LIFYGALGLIIGGRLGYMLFY), 92-112 (WRGGMSFHGGLIGVIVTTWIF), 126-146 (FVVPLVPLGLAAGRIGNFING), 173-193 (QLYEFLLEGALLFIVIWWFSA), 199-219 (FAVSSLFLLCYGLFRFTAEFF), and 227-247 (GFVAFGWLTRGQELSLPMIII). Arg139 lines the a 1,2-diacyl-sn-glycero-3-phospho-(1'-sn-glycerol) pocket.

Belongs to the Lgt family.

It localises to the cell inner membrane. The enzyme catalyses L-cysteinyl-[prolipoprotein] + a 1,2-diacyl-sn-glycero-3-phospho-(1'-sn-glycerol) = an S-1,2-diacyl-sn-glyceryl-L-cysteinyl-[prolipoprotein] + sn-glycerol 1-phosphate + H(+). The protein operates within protein modification; lipoprotein biosynthesis (diacylglyceryl transfer). Functionally, catalyzes the transfer of the diacylglyceryl group from phosphatidylglycerol to the sulfhydryl group of the N-terminal cysteine of a prolipoprotein, the first step in the formation of mature lipoproteins. The polypeptide is Phosphatidylglycerol--prolipoprotein diacylglyceryl transferase (Coxiella burnetii (strain Dugway 5J108-111)).